The following is a 472-amino-acid chain: Trigger factor (472 aa).

In terms of domain architecture, PPIase FKBP-type spans G174 to P261. Residues E430–A472 form a disordered region. Over residues A452 to A464 the composition is skewed to basic residues.

This sequence belongs to the FKBP-type PPIase family. Tig subfamily.

It localises to the cytoplasm. The catalysed reaction is [protein]-peptidylproline (omega=180) = [protein]-peptidylproline (omega=0). Its function is as follows. Involved in protein export. Acts as a chaperone by maintaining the newly synthesized protein in an open conformation. Functions as a peptidyl-prolyl cis-trans isomerase. This Parasynechococcus marenigrum (strain WH8102) protein is Trigger factor.